The sequence spans 263 residues: tRNA1(Val) (adenine(37)-N6)-methyltransferase (263 aa).

The protein belongs to the methyltransferase superfamily. tRNA (adenine-N(6)-)-methyltransferase family.

The protein resides in the cytoplasm. The catalysed reaction is adenosine(37) in tRNA1(Val) + S-adenosyl-L-methionine = N(6)-methyladenosine(37) in tRNA1(Val) + S-adenosyl-L-homocysteine + H(+). Functionally, specifically methylates the adenine in position 37 of tRNA(1)(Val) (anticodon cmo5UAC). The sequence is that of tRNA1(Val) (adenine(37)-N6)-methyltransferase from Pseudoalteromonas atlantica (strain T6c / ATCC BAA-1087).